A 463-amino-acid chain; its full sequence is Cytochrome P450 4d8 (463 aa).

Positions 267 and 409 each coordinate heme.

This sequence belongs to the cytochrome P450 family. Heme is required as a cofactor.

It is found in the endoplasmic reticulum membrane. It localises to the microsome membrane. Its function is as follows. May be involved in the metabolism of insect hormones and in the breakdown of synthetic insecticides. In Drosophila melanogaster (Fruit fly), this protein is Cytochrome P450 4d8 (Cyp4d8).